The following is a 66-amino-acid chain: Small ribosomal subunit protein eS27 (66 aa).

Residues C21, C24, C40, and C43 each coordinate Zn(2+). Residues 21-43 (CRQCNNEQVIFSNATFPVRCLSC) form a C4-type zinc finger.

Belongs to the eukaryotic ribosomal protein eS27 family. As to quaternary structure, part of the 30S ribosomal subunit. The cofactor is Zn(2+).

The sequence is that of Small ribosomal subunit protein eS27 from Sulfolobus acidocaldarius (strain ATCC 33909 / DSM 639 / JCM 8929 / NBRC 15157 / NCIMB 11770).